Here is a 220-residue protein sequence, read N- to C-terminus: Cell division protein SepF (220 aa).

Residues 1–120 (MAIKDAFNKM…RREQYQHAAH (120 aa)) form a disordered region. Positions 26 to 35 (LSSKKQEEPV) are enriched in basic and acidic residues. Residues 39–79 (QQTSRPNQQQQAARASQPQQPKQARPQMQAQQRPQSQSRAA) are compositionally biased toward low complexity. Positions 93-102 (VSHDYNDRRA) are enriched in basic and acidic residues.

This sequence belongs to the SepF family. Homodimer. Interacts with FtsZ.

Its subcellular location is the cytoplasm. In terms of biological role, cell division protein that is part of the divisome complex and is recruited early to the Z-ring. Probably stimulates Z-ring formation, perhaps through the cross-linking of FtsZ protofilaments. Its function overlaps with FtsA. This chain is Cell division protein SepF, found in Streptococcus equi subsp. equi (strain 4047).